Here is a 188-residue protein sequence, read N- to C-terminus: Elongation factor P (188 aa).

Lys-34 is modified (N6-(3,6-diaminohexanoyl)-5-hydroxylysine).

It belongs to the elongation factor P family. May be beta-lysylated on the epsilon-amino group of Lys-34 by the combined action of EpmA and EpmB, and then hydroxylated on the C5 position of the same residue by EpmC (if this protein is present). Lysylation is critical for the stimulatory effect of EF-P on peptide-bond formation. The lysylation moiety may extend toward the peptidyltransferase center and stabilize the terminal 3-CCA end of the tRNA. Hydroxylation of the C5 position on Lys-34 may allow additional potential stabilizing hydrogen-bond interactions with the P-tRNA.

The protein resides in the cytoplasm. It functions in the pathway protein biosynthesis; polypeptide chain elongation. Its function is as follows. Involved in peptide bond synthesis. Alleviates ribosome stalling that occurs when 3 or more consecutive Pro residues or the sequence PPG is present in a protein, possibly by augmenting the peptidyl transferase activity of the ribosome. Modification of Lys-34 is required for alleviation. This Actinobacillus pleuropneumoniae serotype 5b (strain L20) protein is Elongation factor P.